The following is a 232-amino-acid chain: MDRKAVEEKRIVISIGGGHATGVGAIALDLQNTFKSLYNSINIRVINLDNMIEGNIKSYNNNDYDFDNILNLVYEKHAVTSQNDMIQHDYEDPIDLIIVCGCYALYDKRINEISQLKVFLDSDADKRLISLIKKKNVGSNEQLAQLITEYMDHLRPEMQQYIEPTRTFADLIIPSTNENLGRAVLVDGIVKAIEDTKSQIEGNNTNNKIRPRLWDFEAETMDLEKDRYYDLS.

17–24 lines the ATP pocket; it reads GGHATGVG.

The protein belongs to the uridine kinase family.

It is found in the cytoplasm. It localises to the nucleus. The catalysed reaction is uridine + ATP = UMP + ADP + H(+). It carries out the reaction cytidine + ATP = CMP + ADP + H(+). The protein operates within pyrimidine metabolism; CTP biosynthesis via salvage pathway; CTP from cytidine: step 1/3. Its pathway is pyrimidine metabolism; UMP biosynthesis via salvage pathway; UMP from uridine: step 1/1. Putative uridine kinase identified in a screen for mutants with increased levels of rDNA transcription. The protein is Putative uridine kinase DAS2 (DAS2) of Saccharomyces cerevisiae (strain ATCC 204508 / S288c) (Baker's yeast).